Consider the following 267-residue polypeptide: 2-keto-3-deoxy-L-rhamnonate aldolase (267 aa).

H49 functions as the Proton acceptor in the catalytic mechanism. Q151 provides a ligand contact to substrate. Mg(2+) is bound at residue E153. Substrate contacts are provided by A178 and D179. Position 179 (D179) interacts with Mg(2+).

The protein belongs to the HpcH/HpaI aldolase family. KDR aldolase subfamily. Homohexamer. It depends on Mg(2+) as a cofactor.

The catalysed reaction is 2-dehydro-3-deoxy-L-rhamnonate = (S)-lactaldehyde + pyruvate. Functionally, catalyzes the reversible retro-aldol cleavage of 2-keto-3-deoxy-L-rhamnonate (KDR) to pyruvate and lactaldehyde. The polypeptide is 2-keto-3-deoxy-L-rhamnonate aldolase (Escherichia coli O6:K15:H31 (strain 536 / UPEC)).